The following is a 213-amino-acid chain: uncharacterized protein (213 aa).

Residues 1 to 19 (MKKVLLLLFVLTIGLALSA) form the signal peptide. The N-palmitoyl cysteine moiety is linked to residue C20. C20 is lipidated: S-diacylglycerol cysteine. Residues 20–62 (CSQSSDASEKEKPKEKKSQEELEKELDKELKKGGEPKTKKDDQ) form a disordered region. Residues 26 to 62 (ASEKEKPKEKKSQEELEKELDKELKKGGEPKTKKDDQ) are compositionally biased toward basic and acidic residues.

Its subcellular location is the cell membrane. This is an uncharacterized protein from Bacillus subtilis (strain 168).